The chain runs to 406 residues: Arginine biosynthesis bifunctional protein ArgJ (406 aa).

Substrate is bound by residues Thr156, Lys182, Thr193, Glu279, Asn401, and Thr406. Thr193 acts as the Nucleophile in catalysis.

It belongs to the ArgJ family. In terms of assembly, heterotetramer of two alpha and two beta chains.

It localises to the cytoplasm. The catalysed reaction is N(2)-acetyl-L-ornithine + L-glutamate = N-acetyl-L-glutamate + L-ornithine. It carries out the reaction L-glutamate + acetyl-CoA = N-acetyl-L-glutamate + CoA + H(+). Its pathway is amino-acid biosynthesis; L-arginine biosynthesis; L-ornithine and N-acetyl-L-glutamate from L-glutamate and N(2)-acetyl-L-ornithine (cyclic): step 1/1. It functions in the pathway amino-acid biosynthesis; L-arginine biosynthesis; N(2)-acetyl-L-ornithine from L-glutamate: step 1/4. Functionally, catalyzes two activities which are involved in the cyclic version of arginine biosynthesis: the synthesis of N-acetylglutamate from glutamate and acetyl-CoA as the acetyl donor, and of ornithine by transacetylation between N(2)-acetylornithine and glutamate. This Bacillus licheniformis (strain ATCC 14580 / DSM 13 / JCM 2505 / CCUG 7422 / NBRC 12200 / NCIMB 9375 / NCTC 10341 / NRRL NRS-1264 / Gibson 46) protein is Arginine biosynthesis bifunctional protein ArgJ.